The sequence spans 259 residues: Trans-4-hydroxycyclohexanecarboxylate dehydrogenase (259 aa).

NAD(+) is bound by residues arginine 20, methionine 22, aspartate 41, aspartate 73, valine 74, asparagine 100, tyrosine 164, lysine 168, valine 197, threonine 199, and threonine 202. Tyrosine 164 serves as the catalytic Proton acceptor.

Belongs to the short-chain dehydrogenases/reductases (SDR) family. In terms of assembly, homodimer. Homotetramer.

The catalysed reaction is trans-4-hydroxycyclohexane-1-carboxylate + NAD(+) = 4-oxocyclohexane-1-carboxylate + NADH + H(+). With respect to regulation, strongly inhibited by N-bromosuccinimide. Not inhibited by sulfhydryl reagents, such as iodoacetic acid, iodoacetamide, N-ethylmaleimide and p-hydroxymercuribenzoic acid. In terms of biological role, dehydrogenase involved in a cyclohexanecarboxylate (CHCA) degradation pathway. Catalyzes the NAD(+)-dependent dehydrogenation of trans-4-hydroxycyclohexanecarboxylate (trans-4-hydroxyCHCA) to form 4-oxocyclohexanecarboxylate (4-oxoCHCA). Is highly specific for the trans-4-hydroxy derivative and shows only weak activity with cis-4-hydroxyCHCA. Can also catalyze the reverse reaction (4-oxoCHCA reduction) with a higher catalytic efficiency. In the reverse reaction, is highly specific for 4-oxoCHCA and cannot use either the 2-oxo or the 3-oxo homolog as substrate. Cannot use NADP(+). This Sinomonas cyclohexanicum (Corynebacterium cyclohexanicum) protein is Trans-4-hydroxycyclohexanecarboxylate dehydrogenase.